The sequence spans 217 residues: CLA biosynthesis enone reductase (217 aa).

Residues arginine 20, serine 22, and arginine 24 each contribute to the FMN site. Position 51 (cysteine 51) interacts with 10-oxooctadecanoate. Residues asparagine 78 and glutamine 81 each contribute to the FMN site. Arginine 118 contributes to the 10-oxooctadecanoate binding site. Asparagine 165, serine 168, glycine 169, and arginine 206 together coordinate FMN.

Belongs to the nitroreductase family. As to quaternary structure, homodimer. It depends on FMN as a cofactor.

It carries out the reaction 10-oxo-(11E)-octadecenoate + NADH + H(+) = 10-oxooctadecanoate + NAD(+). It participates in lipid metabolism; fatty acid metabolism. Is involved in a saturation metabolic pathway of polyunsaturated fatty acids, that detoxifies unsaturated fatty acids and generates hydroxy fatty acids, oxo fatty acids, conjugated fatty acids such as conjugated linoleic acids (CLAs), and partially saturated trans-fatty acids as intermediates. CLA-ER catalyzes the saturation of the carbon-carbon double bond in 10-oxo-(11E)-octadecenoate to produce 10-oxooctadecanoate, during linoleate metabolism. As part of the gut microbiome, this enzyme modifies host fatty acid composition and is expected to improve human health by altering lipid metabolism related to the onset of metabolic syndrome. This is CLA biosynthesis enone reductase from Lactiplantibacillus plantarum (Lactobacillus plantarum).